The chain runs to 529 residues: Type I restriction enzyme StySJI methylase subunit (529 aa).

S-adenosyl-L-methionine-binding positions include 148 to 153, 178 to 180, and Glu216; these read QYFTPR and TAG. The tract at residues 405 to 444 is disordered; sequence YGEDPHGLSPREEGEWSFNAEESEVADSEENKNTDQHQAT. Basic and acidic residues predominate over residues 407 to 418; the sequence is EDPHGLSPREEG.

The protein belongs to the N(4)/N(6)-methyltransferase family. As to quaternary structure, the type I restriction/modification system is composed of three polypeptides R, M and S; the restriction enzyme has stoichiometry R(2)M(2)S(1) while the methyltransferase is M(2)S(1).

It carries out the reaction a 2'-deoxyadenosine in DNA + S-adenosyl-L-methionine = an N(6)-methyl-2'-deoxyadenosine in DNA + S-adenosyl-L-homocysteine + H(+). The subtype gamma methyltransferase (M) subunit of a type I restriction enzyme. The M and S subunits together form a methyltransferase (MTase) that methylates two adenine residues of the sequence 5'-GAGN(6)GTRC-3'. In the presence of the R subunit the complex can also act as an endonuclease, binding to the same target sequence but cutting the DNA some distance from this site. Whether the DNA is cut or modified depends on the methylation state of the target sequence. When the target site is unmodified, the DNA is cut. When the target site is hemimethylated, the complex acts as a maintenance MTase modifying the DNA so that both strands become methylated. After locating a non-methylated recognition site, the enzyme complex serves as a molecular motor that translocates DNA in an ATP-dependent manner until a collision occurs that triggers cleavage. The sequence is that of Type I restriction enzyme StySJI methylase subunit from Salmonella typhimurium (strain LT2 / SGSC1412 / ATCC 700720).